A 598-amino-acid polypeptide reads, in one-letter code: Beta-hexosaminidase A (598 aa).

A signal peptide spans 1–11 (MSFITSAHATA). Residue D305 is part of the active site.

This sequence belongs to the glycosyl hydrolase 3 family.

The enzyme catalyses Hydrolysis of terminal non-reducing N-acetyl-D-hexosamine residues in N-acetyl-beta-D-hexosaminides.. Most active towards p-nitrophenyl-N-acetyl-beta-D-glucosaminide(PNP-beta-GlcNAc) and diacetylchitobiose. This chain is Beta-hexosaminidase A (cht60), found in Pseudoalteromonas piscicida.